Reading from the N-terminus, the 442-residue chain is PCI domain-containing protein C1105.07c (442 aa).

The PCI domain occupies valine 224–serine 415.

It is found in the cytoplasm. Its subcellular location is the nucleus envelope. This is PCI domain-containing protein C1105.07c from Schizosaccharomyces pombe (strain 972 / ATCC 24843) (Fission yeast).